A 309-amino-acid polypeptide reads, in one-letter code: Homoserine kinase (309 aa).

Position 91-101 (91-101) interacts with ATP; the sequence is PIGSGLGSSAC.

The protein belongs to the GHMP kinase family. Homoserine kinase subfamily.

It is found in the cytoplasm. It catalyses the reaction L-homoserine + ATP = O-phospho-L-homoserine + ADP + H(+). The protein operates within amino-acid biosynthesis; L-threonine biosynthesis; L-threonine from L-aspartate: step 4/5. Functionally, catalyzes the ATP-dependent phosphorylation of L-homoserine to L-homoserine phosphate. The protein is Homoserine kinase of Buchnera aphidicola subsp. Schizaphis graminum (strain Sg).